The following is a 437-amino-acid chain: tRNA(Ile)-lysidine synthase (437 aa).

ATP is bound at residue Ser-22 to Ser-27.

It belongs to the tRNA(Ile)-lysidine synthase family.

It localises to the cytoplasm. It carries out the reaction cytidine(34) in tRNA(Ile2) + L-lysine + ATP = lysidine(34) in tRNA(Ile2) + AMP + diphosphate + H(+). Ligates lysine onto the cytidine present at position 34 of the AUA codon-specific tRNA(Ile) that contains the anticodon CAU, in an ATP-dependent manner. Cytidine is converted to lysidine, thus changing the amino acid specificity of the tRNA from methionine to isoleucine. The sequence is that of tRNA(Ile)-lysidine synthase from Xylella fastidiosa (strain 9a5c).